The sequence spans 591 residues: 5'-nucleotidase domain-containing protein DDB_G0275467 (591 aa).

Low complexity-rich tracts occupy residues 38 to 50 (STTT…SYST) and 68 to 78 (QHQQQQPQQHQ). The interval 38 to 88 (STTTTSGIKSYSTHNRSNNDTHTSKSNTIDQHQQQQPQQHQNNDNKHLFTP) is disordered. Asp-165 acts as the Nucleophile in catalysis. The Mg(2+) site is built by Asp-165 and Asp-167. Asp-167 functions as the Proton donor in the catalytic mechanism. 305–313 (TAAVGKVHL) lines the substrate pocket. Residue Asp-450 coordinates Mg(2+).

It belongs to the 5'(3')-deoxyribonucleotidase family. It depends on Mg(2+) as a cofactor.

This Dictyostelium discoideum (Social amoeba) protein is 5'-nucleotidase domain-containing protein DDB_G0275467.